Here is a 98-residue protein sequence, read N- to C-terminus: Acylphosphatase (98 aa).

The 87-residue stretch at 12–98 folds into the Acylphosphatase-like domain; sequence RLSAWVHGHV…DATMTGFSER (87 aa). Active-site residues include Arg-27 and Asn-45.

Belongs to the acylphosphatase family.

It catalyses the reaction an acyl phosphate + H2O = a carboxylate + phosphate + H(+). The sequence is that of Acylphosphatase (acyP) from Mycolicibacterium smegmatis (strain ATCC 700084 / mc(2)155) (Mycobacterium smegmatis).